A 224-amino-acid chain; its full sequence is RNA-free ribonuclease P (224 aa).

The protein belongs to the HARP family.

It carries out the reaction Endonucleolytic cleavage of RNA, removing 5'-extranucleotides from tRNA precursor.. Its function is as follows. RNA-free RNase P that catalyzes the removal of the 5'-leader sequence from pre-tRNA to produce the mature 5'-terminus. The polypeptide is RNA-free ribonuclease P (Haloarcula marismortui (strain ATCC 43049 / DSM 3752 / JCM 8966 / VKM B-1809) (Halobacterium marismortui)).